We begin with the raw amino-acid sequence, 302 residues long: Pyridoxal 5'-phosphate synthase subunit PdxS (302 aa).

Aspartate 32 lines the D-ribose 5-phosphate pocket. The Schiff-base intermediate with D-ribose 5-phosphate role is filled by lysine 89. Residue glycine 161 coordinates D-ribose 5-phosphate. Arginine 173 is a binding site for D-glyceraldehyde 3-phosphate. Residues glycine 222 and 243 to 244 (GS) contribute to the D-ribose 5-phosphate site. Residues 275–302 (IAKNPGKGMKGQANADLDEEEQLQGRGV) are disordered.

This sequence belongs to the PdxS/SNZ family. In terms of assembly, in the presence of PdxT, forms a dodecamer of heterodimers.

The catalysed reaction is aldehydo-D-ribose 5-phosphate + D-glyceraldehyde 3-phosphate + L-glutamine = pyridoxal 5'-phosphate + L-glutamate + phosphate + 3 H2O + H(+). It functions in the pathway cofactor biosynthesis; pyridoxal 5'-phosphate biosynthesis. Functionally, catalyzes the formation of pyridoxal 5'-phosphate from ribose 5-phosphate (RBP), glyceraldehyde 3-phosphate (G3P) and ammonia. The ammonia is provided by the PdxT subunit. Can also use ribulose 5-phosphate and dihydroxyacetone phosphate as substrates, resulting from enzyme-catalyzed isomerization of RBP and G3P, respectively. The polypeptide is Pyridoxal 5'-phosphate synthase subunit PdxS (Haloarcula marismortui (strain ATCC 43049 / DSM 3752 / JCM 8966 / VKM B-1809) (Halobacterium marismortui)).